The following is a 784-amino-acid chain: Toll-like receptor 2 (784 aa).

An N-terminal signal peptide occupies residues 1–24; that stretch reads MLRALWLFWILVAITVLFSKRCSA. At 25 to 587 the chain is on the extracellular side; the sequence is QESLSCDASG…ARPSVLECHQ (563 aa). C30 and C36 are joined by a disulfide. LRR repeat units follow at residues 54 to 77, 78 to 101, 102 to 125, 126 to 150, 151 to 175, 176 to 199, 200 to 223, 224 to 250, 251 to 278, 279 to 308, 309 to 337, 338 to 361, 362 to 388, 389 to 414, 415 to 437, 438 to 457, 458 to 478, 479 to 500, and 501 to 524; these read MKSL…ACAN, LQVL…SLGS, LEHL…PLSS, LKYL…NLTN, LQTL…GLTS, LNEL…SIRD, IHHL…ILSS, VRYL…VSSP, MKKL…YILE, LSEV…ELGK, VETV…LLEK, VKRI…HLKS, LEFL…AWPS, LQTL…TLKN, LTSL…WPEK, MRFL…CIPQ, TLEV…FLPR, LQEL…LFPV, and LLVM…SFPK. A glycan (N-linked (GlcNAc...) asparagine) is linked at N147. The cysteines at positions 353 and 382 are disulfide-linked. N414 carries N-linked (GlcNAc...) asparagine glycosylation. A disulfide bridge connects residues C432 and C454. An N-linked (GlcNAc...) asparagine glycan is attached at N442. The region spanning 525–576 is the LRRCT domain; it reads LETLEAGDNHFVCSCELLSFTMETPALAQILVDWPDSYLCDSPPRLHGHRLQ. A helical membrane pass occupies residues 588–608; that stretch reads AALVSGVCCALLLLILLVGAL. Residues 609–784 lie on the Cytoplasmic side of the membrane; that stretch reads CHHFHGLWYL…WVNLRTAIKS (176 aa). In terms of domain architecture, TIR spans 639–782; the sequence is VCYDAFVSYS…VFWVNLRTAI (144 aa). A Glycyl lysine isopeptide (Lys-Gly) (interchain with G-Cter in ubiquitin) cross-link involves residue K754. The short motif at 761 to 778 is the ATG16L1-binding motif element; sequence YLEWPLDEGQQEVFWVNL.

It belongs to the Toll-like receptor family. Interacts with LY96, TLR1 and TLR6 (via extracellular domain). TLR2 seems to exist in heterodimers with either TLR1 or TLR6 before stimulation by the ligand. The heterodimers form bigger oligomers in response to their corresponding ligands as well as further heterotypic associations with other receptors such as CD14 and/or CD36. Binds MYD88 (via TIR domain). Interacts with TICAM1. Interacts with CNPY3. Interacts with ATG16L1. Interacts with non-modified M.tuberculosis protein MPT83. Interacts with PPP1R11. Interacts with TIRAP. As to quaternary structure, (Microbial infection) Interacts with Staphylococcus aureus protein SSL3; this interaction inhibits TLR2-mediated cytokine production. In terms of assembly, (Microbial infection) Interacts with Toxoplasma gondii micronemal protein 1 (MIC1); the interaction promotes activation of bone marrow-derived dendritic cells and macrophages. Interacts with Toxoplasma gondii micronemal protein 4 (MIC4); the interaction promotes activation of bone marrow-derived dendritic cells and macrophages. In terms of processing, ubiquitinated at Lys-754 by PPP1R11, leading to its degradation. Deubiquitinated by USP2. Post-translationally, glycosylation of Asn-442 is critical for secretion of the N-terminal ectodomain of TLR2. As to expression, detected in a macrophage cell line, smooth muscle, lung, spleen, thymus, brain and adipose tissue. Cell surface expression detected in lung alveolar macrophages, dendritic macrophages and at lower levels in lung macrophages (at protein level).

Its subcellular location is the cell membrane. It localises to the cytoplasmic vesicle. The protein localises to the phagosome membrane. It is found in the membrane raft. Functionally, cooperates with LY96 to mediate the innate immune response to bacterial lipoproteins and other microbial cell wall components. Cooperates with TLR1 or TLR6 to mediate the innate immune response to bacterial lipoproteins or lipopeptides. Acts via MYD88 and TRAF6, leading to NF-kappa-B activation, cytokine secretion and the inflammatory response. May also promote apoptosis in response to lipoproteins. Forms activation clusters composed of several receptors depending on the ligand, these clusters trigger signaling from the cell surface and subsequently are targeted to the Golgi in a lipid-raft dependent pathway. Forms the cluster TLR2:TLR6:CD14:CD36 in response to diacylated lipopeptides and TLR2:TLR1:CD14 in response to triacylated lipopeptides. Recognizes M.tuberculosis major T-antigen EsxA (ESAT-6) which inhibits downstream MYD88-dependent signaling. Acts as the major receptor for M.tuberculosis lipoproteins LprA, LprG, LpqH and PhoS1 (pstS1), in conjunction with TLR1 and for some but not all lipoproteins CD14 and/or CD36. The lipoproteins act as agonists to modulate antigen presenting cell functions in response to the pathogen. Recombinant MPT83 from M.tuberculosis stimulates secretion of cytokines (TNF-alpha, IL-6 and IL-12p40) by mouse macrophage cell lines in a TLR2-dependent fashion, which leads to increased host innate immunity responses against the bacterium. Lung macrophages which express low levels of TLR2 respond poorly to stimulation by M.tuberculosis LpqH. Required for normal uptake of M.tuberculosis, a process that is inhibited by M.tuberculosis LppM. Interacts with TICAM2. Its function is as follows. (Microbial infection) Mediates activation of bone marrow-derived dendritic cells and macrophages, and production of pro-inflammatory cytokines, such as IL12 (IL12B/IL12A), triggered by Toxoplasma gondii micronemal protein 4 (MIC4) and micronemal protein 1 (MIC1). The protein is Toll-like receptor 2 (Tlr2) of Mus musculus (Mouse).